A 298-amino-acid polypeptide reads, in one-letter code: KH domain-containing protein At1g09660/At1g09670 (298 aa).

Residues 152-219 (DVPVDKYPSY…EHLCEPLHVL (68 aa)) form the KH domain. The tract at residues 266-298 (NGTLREESPSPSLSPCLSPSMSPFNSKRAKTEI) is disordered. Residues S273 and S287 each carry the phosphoserine modification. Residues 274-288 (PSPSLSPCLSPSMSP) show a composition bias toward low complexity.

Its subcellular location is the nucleus. The polypeptide is KH domain-containing protein At1g09660/At1g09670 (Arabidopsis thaliana (Mouse-ear cress)).